A 643-amino-acid chain; its full sequence is 1-deoxy-D-xylulose-5-phosphate synthase (643 aa).

Thiamine diphosphate contacts are provided by residues histidine 89 and 130–132 (GHS). Aspartate 161 contacts Mg(2+). Residues 162–163 (GA), asparagine 190, phenylalanine 297, and glutamate 380 each bind thiamine diphosphate. A Mg(2+)-binding site is contributed by asparagine 190.

Belongs to the transketolase family. DXPS subfamily. As to quaternary structure, homodimer. Requires Mg(2+) as cofactor. Thiamine diphosphate serves as cofactor.

It carries out the reaction D-glyceraldehyde 3-phosphate + pyruvate + H(+) = 1-deoxy-D-xylulose 5-phosphate + CO2. The protein operates within metabolic intermediate biosynthesis; 1-deoxy-D-xylulose 5-phosphate biosynthesis; 1-deoxy-D-xylulose 5-phosphate from D-glyceraldehyde 3-phosphate and pyruvate: step 1/1. Catalyzes the acyloin condensation reaction between C atoms 2 and 3 of pyruvate and glyceraldehyde 3-phosphate to yield 1-deoxy-D-xylulose-5-phosphate (DXP). The protein is 1-deoxy-D-xylulose-5-phosphate synthase of Hahella chejuensis (strain KCTC 2396).